Consider the following 148-residue polypeptide: Large ribosomal subunit protein bL9 (148 aa).

Belongs to the bacterial ribosomal protein bL9 family.

Its function is as follows. Binds to the 23S rRNA. This chain is Large ribosomal subunit protein bL9, found in Marinobacter nauticus (strain ATCC 700491 / DSM 11845 / VT8) (Marinobacter aquaeolei).